Reading from the N-terminus, the 396-residue chain is Glutamyl-tRNA reductase (396 aa).

Substrate contacts are provided by residues 45 to 48, Ser-101, 106 to 108, and Gln-112; these read TCNR and EDQ. Cys-46 serves as the catalytic Nucleophile. Residue 177 to 182 participates in NADP(+) binding; it reads GFGDVG.

The protein belongs to the glutamyl-tRNA reductase family. As to quaternary structure, homodimer.

The catalysed reaction is (S)-4-amino-5-oxopentanoate + tRNA(Glu) + NADP(+) = L-glutamyl-tRNA(Glu) + NADPH + H(+). The protein operates within porphyrin-containing compound metabolism; protoporphyrin-IX biosynthesis; 5-aminolevulinate from L-glutamyl-tRNA(Glu): step 1/2. Functionally, catalyzes the NADPH-dependent reduction of glutamyl-tRNA(Glu) to glutamate 1-semialdehyde (GSA). The polypeptide is Glutamyl-tRNA reductase (Clostridium acetobutylicum (strain ATCC 824 / DSM 792 / JCM 1419 / IAM 19013 / LMG 5710 / NBRC 13948 / NRRL B-527 / VKM B-1787 / 2291 / W)).